A 169-amino-acid chain; its full sequence is Endoribonuclease YbeY (169 aa).

Residues histidine 135, histidine 139, and histidine 145 each contribute to the Zn(2+) site.

Belongs to the endoribonuclease YbeY family. The cofactor is Zn(2+).

The protein resides in the cytoplasm. Functionally, single strand-specific metallo-endoribonuclease involved in late-stage 70S ribosome quality control and in maturation of the 3' terminus of the 16S rRNA. The polypeptide is Endoribonuclease YbeY (Lachnospira eligens (strain ATCC 27750 / DSM 3376 / VPI C15-48 / C15-B4) (Eubacterium eligens)).